Here is a 350-residue protein sequence, read N- to C-terminus: Small ribosomal subunit biogenesis GTPase RsgA (350 aa).

The span at Met1–Asn17 shows a compositional bias: polar residues. The disordered stretch occupies residues Met1–Glu27. A CP-type G domain is found at Thr104–Phe273. GTP is bound by residues Asn160–Asp163 and Gly214–Ser222. Zn(2+) is bound by residues Cys297, Cys302, His304, and Cys310.

The protein belongs to the TRAFAC class YlqF/YawG GTPase family. RsgA subfamily. Monomer. Associates with 30S ribosomal subunit, binds 16S rRNA. The cofactor is Zn(2+).

The protein localises to the cytoplasm. Functionally, one of several proteins that assist in the late maturation steps of the functional core of the 30S ribosomal subunit. Helps release RbfA from mature subunits. May play a role in the assembly of ribosomal proteins into the subunit. Circularly permuted GTPase that catalyzes slow GTP hydrolysis, GTPase activity is stimulated by the 30S ribosomal subunit. The chain is Small ribosomal subunit biogenesis GTPase RsgA from Salmonella typhi.